We begin with the raw amino-acid sequence, 196 residues long: Putative HTH-type transcriptional regulator in exeN 3'region (196 aa).

Residues 120-185 enclose the HTH luxR-type domain; the sequence is ASVGGDRLTR…ELFNLFLNHL (66 aa). A DNA-binding region (H-T-H motif) is located at residues 144–163; the sequence is TEAIAAALGIGNGTVKNHRK.

The protein is Putative HTH-type transcriptional regulator in exeN 3'region of Aeromonas salmonicida.